Reading from the N-terminus, the 258-residue chain is ATP synthase subunit a (258 aa).

Helical transmembrane passes span 38 to 58 (KPVWFLWLGAAITFLFMYVGA), 94 to 114 (WFPYSLTLFIFLLVLNIIGLF), 118 to 138 (YPVTSNISFTATLALFTFVLT), 193 to 213 (ILAGHLIIFVFLSLILYFGLP), and 215 to 235 (AFVSVPFAVVFYAFEIFVAVI).

It belongs to the ATPase A chain family. In terms of assembly, F-type ATPases have 2 components, CF(1) - the catalytic core - and CF(0) - the membrane proton channel. CF(1) has five subunits: alpha(3), beta(3), gamma(1), delta(1), epsilon(1). CF(0) has three main subunits: a(1), b(2) and c(9-12). The alpha and beta chains form an alternating ring which encloses part of the gamma chain. CF(1) is attached to CF(0) by a central stalk formed by the gamma and epsilon chains, while a peripheral stalk is formed by the delta and b chains.

It localises to the cell membrane. In terms of biological role, key component of the proton channel; it plays a direct role in the translocation of protons across the membrane. The protein is ATP synthase subunit a of Rubrobacter xylanophilus (strain DSM 9941 / JCM 11954 / NBRC 16129 / PRD-1).